Consider the following 127-residue polypeptide: Large ribosomal subunit protein bL17 (127 aa).

Belongs to the bacterial ribosomal protein bL17 family. Part of the 50S ribosomal subunit. Contacts protein L32.

This is Large ribosomal subunit protein bL17 from Enterococcus faecalis (strain ATCC 700802 / V583).